A 223-amino-acid chain; its full sequence is MTKQQANWSPYDNNGGTCVAVAGADYCVIAADTRMSTGYNILTRDYSKIIKLADKCVMASSGFQADVRALQKVLASRHLIYQHQHNKQMSCPAMGQLLSNTLYYKRFFPYYSFNVLGGLDSEGKGCVFTYDAVGSYERVGYSSQGSGSTLIMPFLDNQLKSPSPLLLPAQDAVTPLSEAEAIDLVKTCFASATERDIYTGDRLEIVILNASGIRREEMELRKD.

It belongs to the peptidase T1B family. In terms of assembly, the 26S proteasome consists of a 20S proteasome core and two 19S regulatory subunits. The 20S proteasome core is composed of 28 subunits that are arranged in four stacked rings, resulting in a barrel-shaped structure. The two end rings are each formed by seven alpha subunits, and the two central rings are each formed by seven beta subunits. The catalytic chamber with the active sites is on the inside of the barrel.

It localises to the cytoplasm. The protein localises to the nucleus. Functionally, non-catalytic component of the proteasome, a multicatalytic proteinase complex which is characterized by its ability to cleave peptides with Arg, Phe, Tyr, Leu, and Glu adjacent to the leaving group at neutral or slightly basic pH. The proteasome has an ATP-dependent proteolytic activity. This is Proteasome subunit beta type-1 (PBF1) from Petunia hybrida (Petunia).